A 408-amino-acid chain; its full sequence is Translation initiation factor 2 subunit gamma (408 aa).

Residues 4–201 enclose the tr-type G domain; that stretch reads QSEINIGLVG…TIEERIKTPK (198 aa). The segment at 13–20 is G1; that stretch reads GHVDHGKT. The Mg(2+) site is built by Asp16, Thr20, Gly41, and Ser43. 16–21 contributes to the GTP binding site; sequence DHGKTT. The interval 41 to 45 is G2; it reads GISIR. Residues Cys56, Cys59, Cys71, and Cys74 each coordinate Zn(2+). Residues 88–91 are G3; it reads DAPG. Residues 144–147 and 179–181 contribute to the GTP site; these read NKID and SAQ. Residues 144–147 are G4; that stretch reads NKID. The interval 179-181 is G5; sequence SAQ.

This sequence belongs to the TRAFAC class translation factor GTPase superfamily. Classic translation factor GTPase family. EIF2G subfamily. As to quaternary structure, heterotrimer composed of an alpha, a beta and a gamma chain. It depends on Mg(2+) as a cofactor.

It carries out the reaction GTP + H2O = GDP + phosphate + H(+). EIF-2 functions in the early steps of protein synthesis by forming a ternary complex with GTP and initiator tRNA. This Methanothermobacter thermautotrophicus (strain ATCC 29096 / DSM 1053 / JCM 10044 / NBRC 100330 / Delta H) (Methanobacterium thermoautotrophicum) protein is Translation initiation factor 2 subunit gamma.